Consider the following 194-residue polypeptide: dITP/XTP pyrophosphatase (194 aa).

8–13 (TSNPGK) provides a ligand contact to substrate. Mg(2+) is bound by residues E38 and D67. D67 serves as the catalytic Proton acceptor. Substrate-binding positions include S68, 152–155 (FGYD), K175, and 180–181 (HR).

Belongs to the HAM1 NTPase family. Homodimer. Requires Mg(2+) as cofactor.

The enzyme catalyses XTP + H2O = XMP + diphosphate + H(+). It catalyses the reaction dITP + H2O = dIMP + diphosphate + H(+). The catalysed reaction is ITP + H2O = IMP + diphosphate + H(+). In terms of biological role, pyrophosphatase that catalyzes the hydrolysis of nucleoside triphosphates to their monophosphate derivatives, with a high preference for the non-canonical purine nucleotides XTP (xanthosine triphosphate), dITP (deoxyinosine triphosphate) and ITP. Seems to function as a house-cleaning enzyme that removes non-canonical purine nucleotides from the nucleotide pool, thus preventing their incorporation into DNA/RNA and avoiding chromosomal lesions. The protein is dITP/XTP pyrophosphatase of Legionella pneumophila (strain Paris).